The primary structure comprises 195 residues: Imidazoleglycerol-phosphate dehydratase (195 aa).

Belongs to the imidazoleglycerol-phosphate dehydratase family.

The protein resides in the cytoplasm. The catalysed reaction is D-erythro-1-(imidazol-4-yl)glycerol 3-phosphate = 3-(imidazol-4-yl)-2-oxopropyl phosphate + H2O. The protein operates within amino-acid biosynthesis; L-histidine biosynthesis; L-histidine from 5-phospho-alpha-D-ribose 1-diphosphate: step 6/9. This chain is Imidazoleglycerol-phosphate dehydratase, found in Pelotomaculum thermopropionicum (strain DSM 13744 / JCM 10971 / SI).